Reading from the N-terminus, the 228-residue chain is Caspase recruitment domain-containing protein 19 (228 aa).

A disulfide bridge connects residues C7 and C77. The region spanning 8–99 is the CARD domain; sequence DRLVQDTPFL…PLHSRLPSRH (92 aa). V113 bears the Phosphoserine mark.

As to quaternary structure, associates with BCL10 by CARD-CARD interaction. In terms of tissue distribution, expressed in ovary, testis, placenta, skeletal muscle, kidney, lung, heart and liver (at protein level). Expressed in thymus and brain.

Its subcellular location is the nucleus. The protein resides in the endoplasmic reticulum membrane. The protein localises to the mitochondrion membrane. Functionally, plays a role in inhibiting the effects of BCL10-induced activation of NF-kappa-B. May inhibit the phosphorylation of BCL10 in a CARD-dependent manner. In Homo sapiens (Human), this protein is Caspase recruitment domain-containing protein 19 (CARD19).